The chain runs to 324 residues: Ribosomal RNA small subunit methyltransferase H (324 aa).

S-adenosyl-L-methionine-binding positions include 41-43 (GGH), aspartate 60, tyrosine 87, aspartate 111, and glutamine 118.

This sequence belongs to the methyltransferase superfamily. RsmH family.

The protein resides in the cytoplasm. The catalysed reaction is cytidine(1402) in 16S rRNA + S-adenosyl-L-methionine = N(4)-methylcytidine(1402) in 16S rRNA + S-adenosyl-L-homocysteine + H(+). Functionally, specifically methylates the N4 position of cytidine in position 1402 (C1402) of 16S rRNA. This is Ribosomal RNA small subunit methyltransferase H from Nocardia farcinica (strain IFM 10152).